The following is a 132-amino-acid chain: Large ribosomal subunit protein uL14 (132 aa).

Belongs to the universal ribosomal protein uL14 family. Part of the 50S ribosomal subunit. Forms a cluster with proteins L3 and L24e, part of which may contact the 16S rRNA in 2 intersubunit bridges.

In terms of biological role, binds to 23S rRNA. Forms part of two intersubunit bridges in the 70S ribosome. This Methanosarcina acetivorans (strain ATCC 35395 / DSM 2834 / JCM 12185 / C2A) protein is Large ribosomal subunit protein uL14.